A 908-amino-acid chain; its full sequence is 26S proteasome non-ATPase regulatory subunit 2 (908 aa).

Residue methionine 1 is modified to N-acetylmethionine. The tract at residues 1 to 51 (MEEGGRDKTPVQSQQPSATAPSGADEKSSGKERRDAGEKDKEQELSEEDKQ) is disordered. Threonine 9 is subject to Phosphothreonine. The span at 10 to 20 (PVQSQQPSATA) shows a compositional bias: polar residues. Basic and acidic residues predominate over residues 24 to 51 (ADEKSSGKERRDAGEKDKEQELSEEDKQ). Phosphoserine occurs at positions 29 and 147. Tyrosine 194 bears the Phosphotyrosine mark. 2 positions are modified to phosphoserine: serine 361 and serine 363. PC repeat units follow at residues 409–442 (SAAA…YIKS), 443–479 (GALL…TMRL), 480–514 (GSIF…SMEV), 517–551 (VTAL…TELK), and 560–589 (LGLG…PFRS). Lysine 551 is modified (N6-acetyllysine). Residues 623–643 (KEKEEDKDKKEKKDKDKKEAP) are compositionally biased toward basic and acidic residues. Residues 623–645 (KEKEEDKDKKEKKDKDKKEAPAD) form a disordered region. PC repeat units follow at residues 692–723 (LALA…EVSY) and 742–757 (AAML…KDPN). Residues 708-903 (DTLSKFSHDA…LEGFVILRKN (196 aa)) form a required for interaction with UBLCP1 region.

This sequence belongs to the proteasome subunit S2 family. As to quaternary structure, component of the 19S proteasome regulatory particle complex. The 26S proteasome consists of a 20S core particle (CP) and two 19S regulatory subunits (RP). The regulatory particle is made of a lid composed of 9 subunits, a base containing 6 ATPases and few additional components including PSMD2. Interacts with RPGRIP1L. Interacts with CRY1 in a KDM8-dependent manner. Interacts (via C-terminus) with phosphatase UBLCP1 (via ubiquitin-like domain); the interaction recruits UBLCP1 to the 19S regulatory particle where it dephosphorylates 19S subunit PSMC2/RPT1 which impairs PSMC2 ATPase activity and disrupts 26S proteasome assembly.

Component of the 26S proteasome, a multiprotein complex involved in the ATP-dependent degradation of ubiquitinated proteins. This complex plays a key role in the maintenance of protein homeostasis by removing misfolded or damaged proteins, which could impair cellular functions, and by removing proteins whose functions are no longer required. Therefore, the proteasome participates in numerous cellular processes, including cell cycle progression, apoptosis, or DNA damage repair. Functionally, binds to the intracellular domain of tumor necrosis factor type 1 receptor. The binding domain of TRAP1 and TRAP2 resides outside the death domain of TNFR1. The chain is 26S proteasome non-ATPase regulatory subunit 2 (Psmd2) from Rattus norvegicus (Rat).